We begin with the raw amino-acid sequence, 256 residues long: DNA repair protein RecO (256 aa).

This sequence belongs to the RecO family.

Its function is as follows. Involved in DNA repair and RecF pathway recombination. In Rhizobium johnstonii (strain DSM 114642 / LMG 32736 / 3841) (Rhizobium leguminosarum bv. viciae), this protein is DNA repair protein RecO.